A 248-amino-acid polypeptide reads, in one-letter code: 3-deoxy-manno-octulosonate cytidylyltransferase (248 aa).

Belongs to the KdsB family.

Its subcellular location is the cytoplasm. It catalyses the reaction 3-deoxy-alpha-D-manno-oct-2-ulosonate + CTP = CMP-3-deoxy-beta-D-manno-octulosonate + diphosphate. It participates in nucleotide-sugar biosynthesis; CMP-3-deoxy-D-manno-octulosonate biosynthesis; CMP-3-deoxy-D-manno-octulosonate from 3-deoxy-D-manno-octulosonate and CTP: step 1/1. Its pathway is bacterial outer membrane biogenesis; lipopolysaccharide biosynthesis. In terms of biological role, activates KDO (a required 8-carbon sugar) for incorporation into bacterial lipopolysaccharide in Gram-negative bacteria. The chain is 3-deoxy-manno-octulosonate cytidylyltransferase from Cronobacter sakazakii (strain ATCC BAA-894) (Enterobacter sakazakii).